The primary structure comprises 485 residues: Glutamyl-tRNA(Gln) amidotransferase subunit A (485 aa).

Residues Lys78 and Ser153 each act as charge relay system in the active site. Ser177 functions as the Acyl-ester intermediate in the catalytic mechanism.

The protein belongs to the amidase family. GatA subfamily. As to quaternary structure, heterotrimer of A, B and C subunits.

It catalyses the reaction L-glutamyl-tRNA(Gln) + L-glutamine + ATP + H2O = L-glutaminyl-tRNA(Gln) + L-glutamate + ADP + phosphate + H(+). Its function is as follows. Allows the formation of correctly charged Gln-tRNA(Gln) through the transamidation of misacylated Glu-tRNA(Gln) in organisms which lack glutaminyl-tRNA synthetase. The reaction takes place in the presence of glutamine and ATP through an activated gamma-phospho-Glu-tRNA(Gln). The sequence is that of Glutamyl-tRNA(Gln) amidotransferase subunit A from Bacillus cereus (strain AH820).